The following is a 702-amino-acid chain: MARTTPIELYRNIGIVAHVDAGKTTTTERILFYTGVNHKMGEVHDGAATMDWMVQEQERGITITSAATTAFWQGSTKQFPHRYRFNIIDTPGHVDFTIEVERSLRVLDGAVVVFSGADGVEPQSETVWRQANKYHVPRLAYVNKMDRQGADFLRVVAQIKQRLGHVPVPIQLAIGSEENFSGQIDLVKMKAIYWNDADQGTSYREEEIPAELRALAEEWRAHMVEAAAEANDELMNKYLEGEELSIEEIKAGLRQRTLANQIVPAVLGSSFKNKGVPLVLDAVIDYLPAPSEIPAIRGTDPDDEEKHDERHADDDEPFSALAFKIATDPFVGTLTFARVYSGVLTSGDAVLNSVKGKKERVGRMVQMHANQRDEIKEVRAGDIAALIGMKDVTTGDTLCAIDKPIILERMDFPDPVISVAVEPKTKADQEKMGIALSKLAQEDPSFRVKTDEETAQTIISGMGELHLDIIVDRMRREFGVEANIGKPQVAYRETIRNTCEIEGKFVRQSGGRGQFGHCWIRFAPADEGQEGLEFHNEVVGGVIPREFIPAIQKGIEDQMQNGVLAGYPLIGLKATVYDGSYHDVDSSEMAFKIAASMATKQLSQKGGAVLLEPVMKVEVVTPEDYMGDVMGDLNRRRGLIQGMEDTPAGKVIRAEVPLGEMFGYATDVRSMSQGRASYSMEFVRYAEVPASVAEGIVARQGR.

One can recognise a tr-type G domain in the interval 8-291; the sequence is ELYRNIGIVA…AVIDYLPAPS (284 aa). Residues 17-24, 89-93, and 143-146 each bind GTP; these read AHVDAGKT, DTPGH, and NKMD. The segment at 293-314 is disordered; that stretch reads IPAIRGTDPDDEEKHDERHADD.

The protein belongs to the TRAFAC class translation factor GTPase superfamily. Classic translation factor GTPase family. EF-G/EF-2 subfamily.

It is found in the cytoplasm. Functionally, catalyzes the GTP-dependent ribosomal translocation step during translation elongation. During this step, the ribosome changes from the pre-translocational (PRE) to the post-translocational (POST) state as the newly formed A-site-bound peptidyl-tRNA and P-site-bound deacylated tRNA move to the P and E sites, respectively. Catalyzes the coordinated movement of the two tRNA molecules, the mRNA and conformational changes in the ribosome. The sequence is that of Elongation factor G 2 (fusB) from Pseudomonas aeruginosa (strain ATCC 15692 / DSM 22644 / CIP 104116 / JCM 14847 / LMG 12228 / 1C / PRS 101 / PAO1).